We begin with the raw amino-acid sequence, 124 residues long: Small ribosomal subunit protein bS6 (124 aa).

Residues 96-124 (ETGPSPMMKEVQREEAKKAAAAQPAEAQA) form a disordered region. Over residues 114–124 (AAAAQPAEAQA) the composition is skewed to low complexity.

Belongs to the bacterial ribosomal protein bS6 family.

Its function is as follows. Binds together with bS18 to 16S ribosomal RNA. This Burkholderia orbicola (strain MC0-3) protein is Small ribosomal subunit protein bS6.